Reading from the N-terminus, the 409-residue chain is Putative lipoate-protein ligase A (409 aa).

In terms of domain architecture, BPL/LPL catalytic spans 146–330 (GPDNCRLVFY…RFQKTFKVDG (185 aa)). Residues Arg-188, 193–196 (GTVL), and Lys-249 contribute to the ATP site. Lys-249 is a binding site for (R)-lipoate.

The protein belongs to the LplA family. In terms of assembly, monomer.

The enzyme catalyses L-lysyl-[lipoyl-carrier protein] + (R)-lipoate + ATP = N(6)-[(R)-lipoyl]-L-lysyl-[lipoyl-carrier protein] + AMP + diphosphate + H(+). Its pathway is protein modification; protein lipoylation via exogenous pathway; protein N(6)-(lipoyl)lysine from lipoate: step 1/2. The protein operates within protein modification; protein lipoylation via exogenous pathway; protein N(6)-(lipoyl)lysine from lipoate: step 2/2. In terms of biological role, catalyzes both the ATP-dependent activation of exogenously supplied lipoate to lipoyl-AMP and the transfer of the activated lipoyl onto the lipoyl domains of lipoate-dependent enzymes. The sequence is that of Putative lipoate-protein ligase A (AIM22) from Saccharomyces cerevisiae (strain YJM789) (Baker's yeast).